Here is a 157-residue protein sequence, read N- to C-terminus: uncharacterized protein (157 aa).

Residues 42–64 (SCIRLIVMFICVAMITCPNSLRF) traverse the membrane as a helical segment.

Its subcellular location is the membrane. This is an uncharacterized protein from Saccharomyces cerevisiae (strain ATCC 204508 / S288c) (Baker's yeast).